Here is a 534-residue protein sequence, read N- to C-terminus: Sodium-dependent lysophosphatidylcholine symporter 1 (534 aa).

Over 1–39 the chain is Cytoplasmic; that stretch reads MAKGEGAESGSAAGLLPTSILQASERPVQVKKEPKKKQQ. The chain crosses the membrane as a helical span at residues 40 to 69; the sequence is LSICNKLCYAVGGAPYQLTGCALGFFLQIY. Topologically, residues 70 to 80 are extracellular; that stretch reads LLDVAKVEPLP. Residues 81–101 traverse the membrane as a helical segment; sequence ASIILFVGRAWDAFTDPLVGF. Residues 102–113 lie on the Cytoplasmic side of the membrane; the sequence is CISKSSWTRLGR. Residues 114–133 traverse the membrane as a helical segment; that stretch reads LMPWIIFSTPLAIIAYFLIW. At 134–148 the chain is on the extracellular side; sequence FVPDFPSGTESSHGF. Residues 149–173 form a helical membrane-spanning segment; it reads LWYLLFYCLFETLVTCFHVPYSALT. The Cytoplasmic portion of the chain corresponds to 174 to 180; the sequence is MFISTEQ. The chain crosses the membrane as a helical span at residues 181 to 212; it reads SERDSATAYRMTVEVLGTVIGTAIQGQIVGQA. Over 213–232 the chain is Extracellular; it reads KAPCLQDQNGSVVVSEVANR. Cys216 and Cys464 are disulfide-bonded. N-linked (GlcNAc...) asparagine glycosylation is found at Asn221 and Asn231. The helical transmembrane segment at 233 to 266 threads the bilayer; it reads TQSTASLKDTQNAYLLAAGIIASIYVLCAFILIL. Residues 267 to 297 lie on the Cytoplasmic side of the membrane; it reads GVREQRELYESQQAESMPFFQGLRLVMGHGP. The helical transmembrane segment at 298–324 threads the bilayer; the sequence is YVKLIAGFLFTSLAFMLVEGNFALFCT. The Extracellular portion of the chain corresponds to 325–335; it reads YTLDFRNEFQN. The chain crosses the membrane as a helical span at residues 336-354; the sequence is LLLAIMLSATFTIPIWQWF. At 355 to 358 the chain is on the cytoplasmic side; that stretch reads LTRF. The helical transmembrane segment at 359–380 threads the bilayer; that stretch reads GKKTAVYIGISSAVPFLILVAL. Residues 381–383 lie on the Extracellular side of the membrane; it reads MER. The helical transmembrane segment at 384 to 420 threads the bilayer; that stretch reads NLIVTYVVAVAAGVSVAAAFLLPWSMLPDVIDDFHLK. Residues 421–430 lie on the Cytoplasmic side of the membrane; sequence HPHSPGTEPI. A helical membrane pass occupies residues 431 to 457; that stretch reads FFSFYVFFTKFASGVSLGVSTLSLDFA. Residues 458–469 are Extracellular-facing; the sequence is NYQRQGCSQPEQ. Residues 470–493 form a helical membrane-spanning segment; the sequence is VKFTLKMLVTMAPIILILLGLLLF. Residues 494–534 lie on the Cytoplasmic side of the membrane; the sequence is KLYPIDEEKRRQNKKALQALREEASSSGCSDTDSTELASIL.

This sequence belongs to the major facilitator superfamily. Post-translationally, N-glycosylated. As to expression, widely expressed. Exhibits an oscillatory pattern of expression in brown adipose tissue and liver consistent with a circadian rhythm. Enriched in brain micro-vessels, where it is specifically present in endothelium constituting the blood-brain barrier (at protein level).

The protein resides in the cell membrane. The protein localises to the endoplasmic reticulum membrane. It catalyses the reaction a 1-acyl-sn-glycero-3-phosphocholine(in) + Na(+)(in) = a 1-acyl-sn-glycero-3-phosphocholine(out) + Na(+)(out). It carries out the reaction 1-(4Z,7Z,10Z,13Z,16Z,19Z-docosahexaenoyl)-sn-glycero-3-phosphocholine(in) + Na(+)(in) = 1-(4Z,7Z,10Z,13Z,16Z,19Z-docosahexaenoyl)-sn-glycero-3-phosphocholine(out) + Na(+)(out). The enzyme catalyses 1-(9Z-octadecenoyl)-sn-glycero-3-phosphocholine(in) + Na(+)(in) = 1-(9Z-octadecenoyl)-sn-glycero-3-phosphocholine(out) + Na(+)(out). The catalysed reaction is 1-hexadecanoyl-sn-glycero-3-phosphocholine(in) + Na(+)(in) = 1-hexadecanoyl-sn-glycero-3-phosphocholine(out) + Na(+)(out). It catalyses the reaction a 1-acyl-sn-glycero-3-phosphoethanolamine(in) + Na(+)(in) = a 1-acyl-sn-glycero-3-phosphoethanolamine(out) + Na(+)(out). Functionally, sodium-dependent lysophosphatidylcholine (LPC) symporter, which plays an essential role for blood-brain barrier formation and function. Specifically expressed in endothelium of the blood-brain barrier of micro-vessels and transports LPC into the brain. Transport of LPC is essential because it constitutes the major mechanism by which docosahexaenoic acid (DHA), an omega-3 fatty acid that is essential for normal brain growth and cognitive function, enters the brain. Transports LPC carrying long-chain fatty acids such LPC oleate and LPC palmitate with a minimum acyl chain length of 14 carbons. Does not transport docosahexaenoic acid in unesterified fatty acid. Not required for central nervous system vascular morphogenesis. The polypeptide is Sodium-dependent lysophosphatidylcholine symporter 1 (Mus musculus (Mouse)).